A 344-amino-acid polypeptide reads, in one-letter code: MSDYVELLKRGGNEAIKINPPTGADFHITSRGSDWLFTVFCVNLLFGVILVPLMFRKPVKDRFVYYTAIAPNLFMSIAYFTMASNLGWIPVRAKYNHVQTSTQKEHPGYRQIFYARYVGWFLAFPWPIIQMSLLGGTPLWQIAFNVGMTEIFTVCWLIAACVHSTYKWGYYTIGIGAAIVVCISLMTTTFNLVKARGKDVSNVFITFMSVIMFLWLIAYPTCFGITDGGNVLQPDSATIFYGIIDLLILSILPVLFMPLANYLGIERLGLIFDEEPAEHVGPVAEKKMPSPASFKSSDSDSSIKEKLKLKKKHKKDKKKAKKAKKAKKAKKAQEEEEDVATDSE.

At 1-34 the chain is on the extracellular side; it reads MSDYVELLKRGGNEAIKINPPTGADFHITSRGSD. The chain crosses the membrane as a helical span at residues 35–55; the sequence is WLFTVFCVNLLFGVILVPLMF. Topologically, residues 56-62 are cytoplasmic; it reads RKPVKDR. Residues 63–83 form a helical membrane-spanning segment; the sequence is FVYYTAIAPNLFMSIAYFTMA. Residues 84–119 lie on the Extracellular side of the membrane; that stretch reads SNLGWIPVRAKYNHVQTSTQKEHPGYRQIFYARYVG. Residues 120–140 form a helical membrane-spanning segment; that stretch reads WFLAFPWPIIQMSLLGGTPLW. A topological domain (cytoplasmic) is located at residue Gln141. The chain crosses the membrane as a helical span at residues 142–162; the sequence is IAFNVGMTEIFTVCWLIAACV. Residues 163–172 lie on the Extracellular side of the membrane; sequence HSTYKWGYYT. A helical transmembrane segment spans residues 173–193; sequence IGIGAAIVVCISLMTTTFNLV. Residues 194–202 are Cytoplasmic-facing; sequence KARGKDVSN. Residues 203-223 form a helical membrane-spanning segment; it reads VFITFMSVIMFLWLIAYPTCF. Residues 224 to 238 lie on the Extracellular side of the membrane; it reads GITDGGNVLQPDSAT. The helical transmembrane segment at 239-259 threads the bilayer; it reads IFYGIIDLLILSILPVLFMPL. The Cytoplasmic portion of the chain corresponds to 260 to 344; it reads ANYLGIERLG…EEEDVATDSE (85 aa). A disordered region spans residues 282–344; the sequence is PVAEKKMPSP…EEEDVATDSE (63 aa). Lys286 participates in a covalent cross-link: Glycyl lysine isopeptide (Lys-Gly) (interchain with G-Cter in ubiquitin). Ser293 is subject to Phosphoserine. The segment covering 297–306 has biased composition (basic and acidic residues); it reads SDSDSSIKEK. The span at 307–330 shows a compositional bias: basic residues; that stretch reads LKLKKKHKKDKKKAKKAKKAKKAK. Residues 334–344 show a composition bias toward acidic residues; sequence EEEEDVATDSE. Thr341 is subject to Phosphothreonine. At Ser343 the chain carries Phosphoserine.

It belongs to the archaeal/bacterial/fungal opsin family.

The protein localises to the membrane. The sequence is that of Protein YRO2 (YRO2) from Saccharomyces cerevisiae (strain ATCC 204508 / S288c) (Baker's yeast).